The primary structure comprises 124 residues: Large ribosomal subunit protein bL12 (124 aa).

It belongs to the bacterial ribosomal protein bL12 family. As to quaternary structure, homodimer. Part of the ribosomal stalk of the 50S ribosomal subunit. Forms a multimeric L10(L12)X complex, where L10 forms an elongated spine to which 2 to 4 L12 dimers bind in a sequential fashion. Binds GTP-bound translation factors.

Functionally, forms part of the ribosomal stalk which helps the ribosome interact with GTP-bound translation factors. Is thus essential for accurate translation. The chain is Large ribosomal subunit protein bL12 from Borreliella burgdorferi (strain ATCC 35210 / DSM 4680 / CIP 102532 / B31) (Borrelia burgdorferi).